The following is a 426-amino-acid chain: Glutamate-1-semialdehyde 2,1-aminomutase (426 aa).

The residue at position 264 (K264) is an N6-(pyridoxal phosphate)lysine.

The protein belongs to the class-III pyridoxal-phosphate-dependent aminotransferase family. HemL subfamily. Pyridoxal 5'-phosphate is required as a cofactor.

The protein resides in the cytoplasm. It carries out the reaction (S)-4-amino-5-oxopentanoate = 5-aminolevulinate. Its pathway is porphyrin-containing compound metabolism; protoporphyrin-IX biosynthesis; 5-aminolevulinate from L-glutamyl-tRNA(Glu): step 2/2. This is Glutamate-1-semialdehyde 2,1-aminomutase from Methanocella arvoryzae (strain DSM 22066 / NBRC 105507 / MRE50).